The sequence spans 425 residues: Serine--tRNA ligase (425 aa).

230-232 (TAE) contacts L-serine. 261-263 (RAE) provides a ligand contact to ATP. L-serine is bound at residue glutamate 284. An ATP-binding site is contributed by 348 to 351 (EISS). Serine 384 is an L-serine binding site.

Belongs to the class-II aminoacyl-tRNA synthetase family. Type-1 seryl-tRNA synthetase subfamily. As to quaternary structure, homodimer. The tRNA molecule binds across the dimer.

It localises to the cytoplasm. It catalyses the reaction tRNA(Ser) + L-serine + ATP = L-seryl-tRNA(Ser) + AMP + diphosphate + H(+). It carries out the reaction tRNA(Sec) + L-serine + ATP = L-seryl-tRNA(Sec) + AMP + diphosphate + H(+). Its pathway is aminoacyl-tRNA biosynthesis; selenocysteinyl-tRNA(Sec) biosynthesis; L-seryl-tRNA(Sec) from L-serine and tRNA(Sec): step 1/1. In terms of biological role, catalyzes the attachment of serine to tRNA(Ser). Is also able to aminoacylate tRNA(Sec) with serine, to form the misacylated tRNA L-seryl-tRNA(Sec), which will be further converted into selenocysteinyl-tRNA(Sec). The chain is Serine--tRNA ligase from Zymomonas mobilis subsp. mobilis (strain ATCC 31821 / ZM4 / CP4).